A 360-amino-acid polypeptide reads, in one-letter code: Photosystem II protein D1 (360 aa).

3 helical membrane-spanning segments follow: residues Y29–T46, H118–L133, and W142–A156. H118 serves as a coordination point for chlorophyll a. Y126 contacts pheophytin a. 2 residues coordinate [CaMn4O5] cluster: D170 and E189. The helical transmembrane segment at F197–L218 threads the bilayer. H198 contributes to the chlorophyll a binding site. A quinone-binding positions include H215 and S264–F265. H215 is a binding site for Fe cation. H272 serves as a coordination point for Fe cation. A helical membrane pass occupies residues F274–L288. Residues H332, E333, D342, and A344 each coordinate [CaMn4O5] cluster. Positions S345–A360 are excised as a propeptide.

It belongs to the reaction center PufL/M/PsbA/D family. In terms of assembly, PSII is composed of 1 copy each of membrane proteins PsbA, PsbB, PsbC, PsbD, PsbE, PsbF, PsbH, PsbI, PsbJ, PsbK, PsbL, PsbM, PsbT, PsbX, PsbY, PsbZ, Psb30/Ycf12, at least 3 peripheral proteins of the oxygen-evolving complex and a large number of cofactors. It forms dimeric complexes. The D1/D2 heterodimer binds P680, chlorophylls that are the primary electron donor of PSII, and subsequent electron acceptors. It shares a non-heme iron and each subunit binds pheophytin, quinone, additional chlorophylls, carotenoids and lipids. D1 provides most of the ligands for the Mn4-Ca-O5 cluster of the oxygen-evolving complex (OEC). There is also a Cl(-1) ion associated with D1 and D2, which is required for oxygen evolution. The PSII complex binds additional chlorophylls, carotenoids and specific lipids. is required as a cofactor. Post-translationally, tyr-161 forms a radical intermediate that is referred to as redox-active TyrZ, YZ or Y-Z. In terms of processing, C-terminally processed by CTPA; processing is essential to allow assembly of the oxygen-evolving complex and thus photosynthetic growth.

The protein localises to the plastid. It localises to the cyanelle thylakoid membrane. The catalysed reaction is 2 a plastoquinone + 4 hnu + 2 H2O = 2 a plastoquinol + O2. In terms of biological role, photosystem II (PSII) is a light-driven water:plastoquinone oxidoreductase that uses light energy to abstract electrons from H(2)O, generating O(2) and a proton gradient subsequently used for ATP formation. It consists of a core antenna complex that captures photons, and an electron transfer chain that converts photonic excitation into a charge separation. The D1/D2 (PsbA/PsbD) reaction center heterodimer binds P680, the primary electron donor of PSII as well as several subsequent electron acceptors. In Cyanophora paradoxa, this protein is Photosystem II protein D1.